We begin with the raw amino-acid sequence, 327 residues long: Tagatose 1,6-diphosphate aldolase 2 (327 aa).

The protein belongs to the aldolase LacD family.

The catalysed reaction is D-tagatofuranose 1,6-bisphosphate = D-glyceraldehyde 3-phosphate + dihydroxyacetone phosphate. It functions in the pathway carbohydrate metabolism; D-tagatose 6-phosphate degradation; D-glyceraldehyde 3-phosphate and glycerone phosphate from D-tagatose 6-phosphate: step 2/2. This chain is Tagatose 1,6-diphosphate aldolase 2 (lacD2), found in Streptococcus pyogenes serotype M3 (strain ATCC BAA-595 / MGAS315).